Here is a 112-residue protein sequence, read N- to C-terminus: DNA-binding protein Memar_1972 (112 aa).

Residues 14–35 are disordered; the sequence is MEQMQRQAMDQQGMEEEAARQQ.

This sequence belongs to the PDCD5 family.

In Methanoculleus marisnigri (strain ATCC 35101 / DSM 1498 / JR1), this protein is DNA-binding protein Memar_1972.